A 241-amino-acid chain; its full sequence is MADS-box transcription factor 57 (241 aa).

In terms of domain architecture, MADS-box spans 1 to 61 (MGRGKIVIRR…GRLYEFSSTN (61 aa)). Residues 85 to 178 (IKIWQREAAS…LNVMSQQKLE (94 aa)) enclose the K-box domain. Positions 216-241 (LELSQSQQREGECSKTAAPELGLHLP) are disordered.

In terms of assembly, interacts with TB1. In terms of tissue distribution, expressed in seedling roots and shoots. Highly expressed in young leaves.

It is found in the nucleus. Functionally, transcriptional factor that targets the CArG motif 5'-C(A/T)TTAAAAAG-3' in the promoter of D14. Directly suppresses D14 expression to control the outgrowth of axillary buds. In Oryza sativa subsp. japonica (Rice), this protein is MADS-box transcription factor 57.